The following is a 276-amino-acid chain: NH(3)-dependent NAD(+) synthetase (276 aa).

43-50 (GISGGVDS) provides a ligand contact to ATP. Residue Asp49 participates in Mg(2+) binding. Residue Arg146 coordinates deamido-NAD(+). Thr166 contributes to the ATP binding site. A Mg(2+)-binding site is contributed by Glu171. 2 residues coordinate deamido-NAD(+): Lys179 and Asp186. Positions 195 and 217 each coordinate ATP. 266–267 (HK) is a deamido-NAD(+) binding site.

This sequence belongs to the NAD synthetase family. In terms of assembly, homodimer.

The enzyme catalyses deamido-NAD(+) + NH4(+) + ATP = AMP + diphosphate + NAD(+) + H(+). It participates in cofactor biosynthesis; NAD(+) biosynthesis; NAD(+) from deamido-NAD(+) (ammonia route): step 1/1. In terms of biological role, catalyzes the ATP-dependent amidation of deamido-NAD to form NAD. Uses ammonia as a nitrogen source. In Vibrio cholerae serotype O1 (strain ATCC 39541 / Classical Ogawa 395 / O395), this protein is NH(3)-dependent NAD(+) synthetase.